The sequence spans 408 residues: MSLSVTRENFDEWMVPVYIPAPFIPVRGEGSRLWDQQGKEYIDFAGGIAVNALGHAHPALREALNEQANRFWHTGNGYTNEPALRLAKKLIDATFAERVFFCNSGAEANEAALKLARKYAHDRVGNHKSGIVAFKNAFHGRTLFTVSAGGQPTYSQDFAPLPPDIRHAAYNDLNSASALIDDNTCAVIVEPVQGEGGVIPATKAFLQGLRELCDRHQALLIFDEVQTGVGRTGELYAYMHYGVTPDILTTAKALGGGFPIGAMLTTQDYASVMTPGTHGTTYGGNPLATAVAGKVLDIINTPEMQNGVRQRHDAFIERLNTLNVRFGMFSEIRGLGLLLGCVLQTKFAGKAKLIAQEAAKAGVMVLIAGGDVVRFAPALNVSDEEIATGLDRFALACERLQAGGASCG.

Position 252 is an N6-(pyridoxal phosphate)lysine (Lys252).

It belongs to the class-III pyridoxal-phosphate-dependent aminotransferase family. AstC subfamily. It depends on pyridoxal 5'-phosphate as a cofactor.

It carries out the reaction N(2)-succinyl-L-ornithine + 2-oxoglutarate = N-succinyl-L-glutamate 5-semialdehyde + L-glutamate. It participates in amino-acid degradation; L-arginine degradation via AST pathway; L-glutamate and succinate from L-arginine: step 3/5. In terms of biological role, catalyzes the transamination of N(2)-succinylornithine and alpha-ketoglutarate into N(2)-succinylglutamate semialdehyde and glutamate. Can also act as an acetylornithine aminotransferase. This chain is Succinylornithine transaminase, found in Salmonella agona (strain SL483).